A 603-amino-acid polypeptide reads, in one-letter code: Probable methyltransferase-like protein 25 (603 aa).

A disordered region spans residues 326–352 (TSSQQIPNRETSEANKERRKMTSKSSE).

In terms of biological role, probable methyltransferase. This is Probable methyltransferase-like protein 25 (METTL25) from Homo sapiens (Human).